Here is a 736-residue protein sequence, read N- to C-terminus: Phosphoribosylformylglycinamidine synthase subunit PurL (736 aa).

Histidine 49 is a catalytic residue. Residues tyrosine 52 and lysine 91 each contribute to the ATP site. A Mg(2+)-binding site is contributed by glutamate 93. Substrate is bound by residues 94–97 (SHNH) and arginine 116. The active-site Proton acceptor is the histidine 95. Aspartate 117 serves as a coordination point for Mg(2+). Glutamine 240 is a binding site for substrate. Residue aspartate 268 participates in Mg(2+) binding. Residue 312–314 (ESQ) participates in substrate binding. Residues aspartate 493 and glycine 530 each contribute to the ATP site. A Mg(2+)-binding site is contributed by asparagine 531. Residue serine 533 participates in substrate binding.

Belongs to the FGAMS family. In terms of assembly, monomer. Part of the FGAM synthase complex composed of 1 PurL, 1 PurQ and 2 PurS subunits.

It is found in the cytoplasm. It carries out the reaction N(2)-formyl-N(1)-(5-phospho-beta-D-ribosyl)glycinamide + L-glutamine + ATP + H2O = 2-formamido-N(1)-(5-O-phospho-beta-D-ribosyl)acetamidine + L-glutamate + ADP + phosphate + H(+). It functions in the pathway purine metabolism; IMP biosynthesis via de novo pathway; 5-amino-1-(5-phospho-D-ribosyl)imidazole from N(2)-formyl-N(1)-(5-phospho-D-ribosyl)glycinamide: step 1/2. In terms of biological role, part of the phosphoribosylformylglycinamidine synthase complex involved in the purines biosynthetic pathway. Catalyzes the ATP-dependent conversion of formylglycinamide ribonucleotide (FGAR) and glutamine to yield formylglycinamidine ribonucleotide (FGAM) and glutamate. The FGAM synthase complex is composed of three subunits. PurQ produces an ammonia molecule by converting glutamine to glutamate. PurL transfers the ammonia molecule to FGAR to form FGAM in an ATP-dependent manner. PurS interacts with PurQ and PurL and is thought to assist in the transfer of the ammonia molecule from PurQ to PurL. This is Phosphoribosylformylglycinamidine synthase subunit PurL from Rhodopseudomonas palustris (strain HaA2).